Reading from the N-terminus, the 570-residue chain is BRICHOS domain-containing protein C09F5.1 (570 aa).

Residues 1–288 are Cytoplasmic-facing; it reads MVVEQIEVIE…YTPELLRSLC (288 aa). Polar residues-rich tracts occupy residues 93-107 and 228-246; these read SGAT…SGDS and TSTL…SLVS. 2 disordered regions span residues 93–116 and 218–248; these read SGAT…GADR and SSWD…VSRE. The chain crosses the membrane as a helical span at residues 289–309; the sequence is CILLLLLLLLFLMFIIFNAIF. The Extracellular portion of the chain corresponds to 310–570; the sequence is NRYAVSEFLL…RKSINNATLV (261 aa). The BRICHOS domain maps to 369–461; that stretch reads TAVDFNTGYV…IDDCEGAQWY (93 aa). The cysteines at positions 395 and 455 are disulfide-linked.

The protein localises to the membrane. This chain is BRICHOS domain-containing protein C09F5.1, found in Caenorhabditis elegans.